The primary structure comprises 1067 residues: Ubiquitin carboxyl-terminal hydrolase 26 (1067 aa).

Basic residues predominate over residues 1–12 (MSRPNTRNKNKR). The disordered stretch occupies residues 1–22 (MSRPNTRNKNKRQRPDAVDSSS). The 337-residue stretch at 106–442 (AGLTNLGATC…DAYMLMYSLR (337 aa)) folds into the USP domain. Cys-115 serves as the catalytic Nucleophile. His-359 (proton acceptor) is an active-site residue. The tract at residues 385–418 (KRPCNEASSSTPQSESNGTASSGNITDGIQSGSS) is disordered. Residues 390–418 (EASSSTPQSESNGTASSGNITDGIQSGSS) show a composition bias toward polar residues. 3 consecutive DUSP domains span residues 503 to 595 (NALT…GDYC), 610 to 711 (DSYR…DCTC), and 738 to 861 (TLKV…SAFI). The region spanning 948–1031 (FEVDRRTSKR…LWVRDTEMHE (84 aa)) is the Ubiquitin-like domain.

This sequence belongs to the peptidase C19 family. As to expression, expressed in seedlings, roots, stems, leaves and inflorescences.

The protein localises to the nucleus. It catalyses the reaction Thiol-dependent hydrolysis of ester, thioester, amide, peptide and isopeptide bonds formed by the C-terminal Gly of ubiquitin (a 76-residue protein attached to proteins as an intracellular targeting signal).. Its function is as follows. Recognizes and hydrolyzes the peptide bond at the C-terminal Gly of ubiquitin. Involved in the processing of poly-ubiquitin precursors as well as that of ubiquitinated proteins. Deubiquitinates H2BK143ub1 of histone H2B. This Arabidopsis thaliana (Mouse-ear cress) protein is Ubiquitin carboxyl-terminal hydrolase 26 (UBP26).